The following is a 119-amino-acid chain: Large ribosomal subunit protein uL18 (119 aa).

It belongs to the universal ribosomal protein uL18 family. In terms of assembly, part of the 50S ribosomal subunit; part of the 5S rRNA/L5/L18/L25 subcomplex. Contacts the 5S and 23S rRNAs.

Functionally, this is one of the proteins that bind and probably mediate the attachment of the 5S RNA into the large ribosomal subunit, where it forms part of the central protuberance. This chain is Large ribosomal subunit protein uL18, found in Nitratidesulfovibrio vulgaris (strain DSM 19637 / Miyazaki F) (Desulfovibrio vulgaris).